Here is an 891-residue protein sequence, read N- to C-terminus: Bifunctional aldehyde-alcohol dehydrogenase AdhE (891 aa).

Positions 2–440 (AVTNVAELNA…ENVGPKHLIN (439 aa)) are aldehyde dehydrogenase. Residues 110–115 (IVPTTN), Gly-195, and Gly-213 contribute to the NAD(+) site. The active-site Nucleophile is the Cys-246. Residues Glu-335 and Leu-419 each contribute to the NAD(+) site. The interval 441-448 (KKTVAKRA) is linker. The alcohol dehydrogenase stretch occupies residues 449–891 (ENMLWHKLPK…KAEKKAKKSA (443 aa)). NAD(+) contacts are provided by residues Asp-487, Asp-519, 546-550 (GSPMD), 597-598 (TT), Val-610, Lys-619, and Leu-638. Fe cation is bound by residues Asp-653, His-657, His-723, and His-737.

It in the N-terminal section; belongs to the aldehyde dehydrogenase family. This sequence in the C-terminal section; belongs to the iron-containing alcohol dehydrogenase family. In terms of assembly, forms long filaments, called spirosomes. It depends on Fe(2+) as a cofactor.

It catalyses the reaction acetaldehyde + NAD(+) + CoA = acetyl-CoA + NADH + H(+). It carries out the reaction ethanol + NAD(+) = acetaldehyde + NADH + H(+). The catalysed reaction is a primary alcohol + NAD(+) = an aldehyde + NADH + H(+). Functionally, under fermentative conditions, catalyzes the sequential NADH-dependent reduction of acetyl-CoA to acetaldehyde and then to ethanol. Plays an important role in virulence and is critical for proper regulation of virulence gene expression. The protein is Bifunctional aldehyde-alcohol dehydrogenase AdhE of Escherichia coli O157:H7.